The primary structure comprises 205 residues: Deoxyuridine 5'-triphosphate nucleotidohydrolase (205 aa).

Residue S54 is modified to Phosphoserine. Substrate contacts are provided by residues 126–128 (RSG), 140–143 (GVID), G151, and 199–200 (FG).

The protein belongs to the dUTPase family. Homotrimer. The cofactor is Mg(2+). Expressed in all tissues examined. Higher levels in heart and kidney.

The protein localises to the cytoplasm. The protein resides in the nucleus. It carries out the reaction dUTP + H2O = dUMP + diphosphate + H(+). It functions in the pathway pyrimidine metabolism; dUMP biosynthesis; dUMP from dCTP (dUTP route): step 2/2. Its function is as follows. Catalyzes the cleavage of 2'-deoxyuridine 5'-triphosphate (dUTP) into 2'-deoxyuridine 5'-monophosphate (dUMP) and inorganic pyrophosphate and through its action efficiently prevents uracil misincorporation into DNA and at the same time provides dUMP, the substrate for de novo thymidylate biosynthesis. Inhibits peroxisome proliferator-activated receptor (PPAR) activity by binding of its N-terminal to PPAR, preventing the latter's dimerization with retinoid X receptor. Essential for embryonic development. In Rattus norvegicus (Rat), this protein is Deoxyuridine 5'-triphosphate nucleotidohydrolase (Dut).